The following is a 337-amino-acid chain: Eukaryotic translation initiation factor 3 subunit H (337 aa).

The region spanning 21 to 153 (VQCDGLAVMK…LKAYRLTPQA (133 aa)) is the MPN domain.

This sequence belongs to the eIF-3 subunit H family. In terms of assembly, component of the eukaryotic translation initiation factor 3 (eIF-3) complex. The eIF-3 complex interacts with pix. Interacts with mxt.

It localises to the cytoplasm. In terms of biological role, component of the eukaryotic translation initiation factor 3 (eIF-3) complex, which is involved in protein synthesis of a specialized repertoire of mRNAs and, together with other initiation factors, stimulates binding of mRNA and methionyl-tRNAi to the 40S ribosome. The eIF-3 complex specifically targets and initiates translation of a subset of mRNAs involved in cell proliferation. The sequence is that of Eukaryotic translation initiation factor 3 subunit H from Drosophila virilis (Fruit fly).